Reading from the N-terminus, the 246-residue chain is UPF0758 protein SSU98_1084 (246 aa).

In terms of domain architecture, MPN spans Arg-103–Val-225. Positions 174, 176, and 187 each coordinate Zn(2+). Residues His-174 to Asp-187 carry the JAMM motif motif.

It belongs to the UPF0758 family.

The polypeptide is UPF0758 protein SSU98_1084 (Streptococcus suis (strain 98HAH33)).